We begin with the raw amino-acid sequence, 123 residues long: Large ribosomal subunit protein bL17 (123 aa).

Belongs to the bacterial ribosomal protein bL17 family. Part of the 50S ribosomal subunit. Contacts protein L32.

The polypeptide is Large ribosomal subunit protein bL17 (Borreliella burgdorferi (strain ZS7) (Borrelia burgdorferi)).